The following is a 293-amino-acid chain: MKIRIAARGSKLSRIQVDMLGEKLKKIGIEYEIIDIKTKADLFSTEPLSKLGKGVFEKEVNEAVLEGKADIAVHSMKDILSEINPSLEIFAVLERDPPYDILIAEKNLDKLDSNITIGTSSIRRKNFLKYIKPEINTKDIRGNVDTRIRKYLSKEYQGLILAEASLKRLNMTMNYHRLNVYDFTPEANQGIIVALGRKKDEKIKEIFKEINHKDTLDEALAERAVISLVGGGCHSPIGVLFKKEGKEFYGIASYSDGKKKITVSISKPGDPYTIGSELGLLLKKEMKNENIIP.

Position 233 is an S-(dipyrrolylmethanemethyl)cysteine (Cys233).

This sequence belongs to the HMBS family. It depends on dipyrromethane as a cofactor.

The enzyme catalyses 4 porphobilinogen + H2O = hydroxymethylbilane + 4 NH4(+). Its pathway is porphyrin-containing compound metabolism; protoporphyrin-IX biosynthesis; coproporphyrinogen-III from 5-aminolevulinate: step 2/4. Functionally, tetrapolymerization of the monopyrrole PBG into the hydroxymethylbilane pre-uroporphyrinogen in several discrete steps. The chain is Probable porphobilinogen deaminase from Saccharolobus islandicus (strain M.16.27) (Sulfolobus islandicus).